A 250-amino-acid polypeptide reads, in one-letter code: Thermostable monoacylglycerol lipase (250 aa).

Phenylalanine 29 provides a ligand contact to substrate. Serine 97 serves as the catalytic Nucleophile. Residue methionine 98 participates in substrate binding. Catalysis depends on charge relay system residues aspartate 196 and histidine 226.

The protein belongs to the lipase/esterase LIP3/BchO family. As to quaternary structure, monomer.

The enzyme catalyses Hydrolyzes glycerol monoesters of long-chain fatty acids.. With respect to regulation, not inhibited by cholate, but slightly inhibited by triton X-100 and deoxycholate. Completely inhibited by PMSF (phenylmethylsulfonyl fluoride) at a concentration of 200 uM. Functionally, hydrolyzes monoacylglycerols, with the highest activity occurring with 1-monolauroylglycerol. This is Thermostable monoacylglycerol lipase from Bacillus sp. (strain H-257).